A 115-amino-acid chain; its full sequence is Non-specific lipid-transfer protein (115 aa).

Positions 1-24 (MASSAVIKLALVVALCMAVSVAHA) are cleaved as a signal peptide. 4 disulfides stabilise this stretch: Cys27-Cys74, Cys37-Cys51, Cys52-Cys97, and Cys72-Cys111.

Belongs to the plant LTP family.

Plant non-specific lipid-transfer proteins transfer phospholipids as well as galactolipids across membranes. May play a role in wax or cutin deposition in the cell walls of expanding epidermal cells and certain secretory tissues. The sequence is that of Non-specific lipid-transfer protein from Pyrus communis (Pear).